Here is a 344-residue protein sequence, read N- to C-terminus: Glyceraldehyde-3-phosphate dehydrogenase (344 aa).

NAD(+)-binding positions include 11–12 (TI) and G110. 139–141 (SCN) serves as a coordination point for D-glyceraldehyde 3-phosphate. C140 (nucleophile) is an active-site residue. Position 169 (R169) interacts with NAD(+). 195–196 (HG) lines the D-glyceraldehyde 3-phosphate pocket. Q302 contacts NAD(+).

Belongs to the glyceraldehyde-3-phosphate dehydrogenase family. As to quaternary structure, homotetramer.

It localises to the cytoplasm. The enzyme catalyses D-glyceraldehyde 3-phosphate + phosphate + NADP(+) = (2R)-3-phospho-glyceroyl phosphate + NADPH + H(+). It carries out the reaction D-glyceraldehyde 3-phosphate + phosphate + NAD(+) = (2R)-3-phospho-glyceroyl phosphate + NADH + H(+). The protein operates within carbohydrate degradation; glycolysis; pyruvate from D-glyceraldehyde 3-phosphate: step 1/5. The polypeptide is Glyceraldehyde-3-phosphate dehydrogenase (Pyrobaculum arsenaticum (strain DSM 13514 / JCM 11321 / PZ6)).